Consider the following 164-residue polypeptide: Vesiculogenesis and immune response regulator (164 aa).

Could be O-mannosylated. Is likely mannosylated on Thr-61 when overexpressed in M.smegmatis.

It is found in the cell inner membrane. The protein resides in the cytoplasm. Virulence factor that regulates vesiculogenesis. Acts by regulating the production of mycobacterial membrane vesicles (MV) bearing Toll-like receptor 2 (TLR2) ligands, including the lipoproteins LpqH, a major host TLR2 agonist, and SodC. By restraining the release of most of the material that activates host cells through TLR2, VirR reduces the immunostimulant potential of M.tuberculosis and increases its virulence. May contribute to cell envelope integrity. In terms of biological role, when overexpressed in M.smegmatis, it modulates the production of IL-10, IL-12 p40 and TNF-alpha by RAW264.7 macrophages and it decreases the killing of M.smegmatis. In Mycobacterium tuberculosis (strain ATCC 25618 / H37Rv), this protein is Vesiculogenesis and immune response regulator.